The following is a 368-amino-acid chain: MSILEQVQPIETMLPERYYTMSTEDMEKRVREIKEKMGKMLFIPGHHYQKDEVVQFSDAVGDSLQLAQVAASNKDAKYIVFCGVHFMAETADMLTTDDQVVILPDMRAGCSMADMADIEQTERAWKELTKLFGDTMIPLTYVNSTAAIKAFCGRNGGATVTSSNAKQMVSWAFTQKERLVFLPDQHLGRNTAYDLGIPLDKMAVWDPHTDSLEYDGDIEEIQVILWKGHCSVHQNFTVKNIESVRKNHSDMNIIVHPECCYEVVAASDYAGSTKYIIDMIESAPPGSKWAIGTEMNLVNRIIQQHPDKEIVSLNPFMCPCLTMNRIDLPHLLWALETIERGEEINVISVDKQVTAEAVLALNRMLERV.

Iminosuccinate is bound by residues H46 and S63. [4Fe-4S] cluster is bound at residue C110. Iminosuccinate contacts are provided by residues Y141–N143 and S162. A [4Fe-4S] cluster-binding site is contributed by C230. Residues H256 to E258 and T273 contribute to the iminosuccinate site. C320 contacts [4Fe-4S] cluster.

Belongs to the quinolinate synthase family. Type 3 subfamily. It depends on [4Fe-4S] cluster as a cofactor.

Its subcellular location is the cytoplasm. It carries out the reaction iminosuccinate + dihydroxyacetone phosphate = quinolinate + phosphate + 2 H2O + H(+). The protein operates within cofactor biosynthesis; NAD(+) biosynthesis; quinolinate from iminoaspartate: step 1/1. Functionally, catalyzes the condensation of iminoaspartate with dihydroxyacetone phosphate to form quinolinate. The polypeptide is Quinolinate synthase (Bacillus cereus (strain ATCC 14579 / DSM 31 / CCUG 7414 / JCM 2152 / NBRC 15305 / NCIMB 9373 / NCTC 2599 / NRRL B-3711)).